Consider the following 119-residue polypeptide: Protein TusC (119 aa).

Belongs to the DsrF/TusC family. Heterohexamer, formed by a dimer of trimers. The hexameric TusBCD complex contains 2 copies each of TusB, TusC and TusD. The TusBCD complex interacts with TusE.

The protein resides in the cytoplasm. Functionally, part of a sulfur-relay system required for 2-thiolation of 5-methylaminomethyl-2-thiouridine (mnm(5)s(2)U) at tRNA wobble positions. In Escherichia coli O127:H6 (strain E2348/69 / EPEC), this protein is Protein TusC.